The chain runs to 865 residues: SWI/SNF chromatin-remodeling complex subunit sol1 (865 aa).

Disordered regions lie at residues 1–34 (MNNQGFVPASDYPTAVSYPTQGQSYNTQEEQPAY), 54–92 (MMNTSENEPNNLAHSQPFRQSPSTQRNLPNQSFDFASNG), 116–143 (QEKEAAMQQQQQQQQQQQLYQRQMQSRE), and 163–183 (VRQTPQPAPSPNTPSGNANQL). Positions 17–30 (SYPTQGQSYNTQEE) are enriched in polar residues. Over residues 121–139 (AMQQQQQQQQQQQLYQRQM) the composition is skewed to low complexity. The ARID domain occupies 188-278 (AASFDKFMVS…YLLPYEEAWL (91 aa)). The segment at 288–380 (QQAKANHSAN…QTSSSAAPVD (93 aa)) is disordered. Residues 328–353 (HSKSPSPAFTANRFSPAAPTTVSSER) show a composition bias toward polar residues. Residues 356-368 (PPYPSAPTRPTPP) are compositionally biased toward pro residues. 2 positions are modified to phosphoserine: S852 and S855.

This sequence belongs to the SWI1 family. Component of the SWI/SNF global transcription activator complex composed of at least arp9, arp42, snf5, snf22, snf30, sbf59, sol1, ssr1, ssr2, ssr3, ssr4 and tfg3.

The protein localises to the nucleus. Functionally, component of the SWI/SNF complex, an ATP-dependent chromatin remodeling complex, required for the positive and negative regulation of gene expression of a large number of genes. It changes chromatin structure by altering DNA-histone contacts within a nucleosome, leading eventually to a change in nucleosome position, thus facilitating or repressing binding of gene-specific transcription factors. This is SWI/SNF chromatin-remodeling complex subunit sol1 (sol1) from Schizosaccharomyces pombe (strain 972 / ATCC 24843) (Fission yeast).